A 151-amino-acid chain; its full sequence is MTKLEQDLVAMLTPAVEMLGFELHGLEFVQAGRHSTLRVYITHEAGISVDNCADASRQISAILDVEDPITNEYDLEVSSPGVDRLLFKQDHYEQAQGEEVQLRTKLPQDGRRNFKGDLIAVTSDMITLSSDGTEHLIMLSNIERANIIAKF.

This sequence belongs to the RimP family.

Its subcellular location is the cytoplasm. Required for maturation of 30S ribosomal subunits. This chain is Ribosome maturation factor RimP, found in Pseudoalteromonas translucida (strain TAC 125).